We begin with the raw amino-acid sequence, 374 residues long: Lipopolysaccharide glucosyltransferase WaaG (374 aa).

UDP-alpha-D-glucose contacts are provided by glycine 15 and aspartate 19. Residues 103 to 132 (YAEKVAQEKGFLYRLTSRYRHYAAFERATF) form a membrane-interacting region region. The UDP-alpha-D-glucose site is built by arginine 173, arginine 208, lysine 209, arginine 261, glutamate 281, alanine 283, glycine 284, isoleucine 285, valine 286, and glutamate 289.

It belongs to the glycosyltransferase group 1 family. Glycosyltransferase 4 subfamily.

The protein localises to the cell inner membrane. It participates in bacterial outer membrane biogenesis; LPS core biosynthesis. Inhibited by divalent metal ions such as Mg(2+), Mn(2+), Ca(2+), Zn(2+), Co(2+), Ni(2+) and Cu(2+). Glucosyltransferase involved in the biosynthesis of the core oligosaccharide region of lipopolysaccharide (LPS). Catalyzes the addition of the first outer-core glucose from UDP-glucose to the inner-core heptose II. Cannot use other sugar donors, such as UDP-galactose, UDP-glucuronic acid, UDP-galacuronic acid, GDP-mannose, ADP-glucose and GDP-glucose. In the absence of a lipid acceptor, can slowly hydrolyze UDP-glucose. The chain is Lipopolysaccharide glucosyltransferase WaaG from Escherichia coli (strain K12).